The chain runs to 453 residues: Midnolin-A (453 aa).

The Ubiquitin-like domain occupies 20 to 94; it reads MNLNIQSTTG…LTLLPSVEAG (75 aa). Disordered regions lie at residues 184-219, 232-256, 333-376, and 390-429; these read SHLA…TTSV, CAEQ…RSRK, RNAK…ENRA, and QKRL…EGSL. Positions 206–219 are enriched in polar residues; sequence HCNGPHSSPLTTSV. 2 stretches are compositionally biased toward low complexity: residues 239–252 and 338–351; these read STRG…SPSS and TSPQ…TTHP. Over residues 365 to 376 the composition is skewed to basic and acidic residues; that stretch reads SGDRLRQTENRA. Residues 390-399 are compositionally biased toward basic residues; that stretch reads QKRLRRKARR. Residues 415-428 are compositionally biased toward low complexity; it reads RTSSNSSTSSGEGS.

The protein localises to the nucleus. It is found in the cytoplasm. It localises to the cytosol. The protein resides in the nucleolus. Facilitates ubiquitin-independent proteasomal degradation of polycomb protein CBX4. Plays a role in inhibiting the activity of glucokinase GCK and both glucose-induced and basal insulin secretion. The polypeptide is Midnolin-A (midn-a) (Xenopus laevis (African clawed frog)).